Reading from the N-terminus, the 495-residue chain is NADP/NAD-dependent aldehyde dehydrogenase PuuC (495 aa).

244–249 (GSTRTG) serves as a coordination point for NAD(+). Catalysis depends on residues glutamate 267 and cysteine 302.

Belongs to the aldehyde dehydrogenase family.

It catalyses the reaction an aldehyde + NADP(+) + H2O = a carboxylate + NADPH + 2 H(+). The enzyme catalyses an aldehyde + NAD(+) + H2O = a carboxylate + NADH + 2 H(+). It carries out the reaction 4-(gamma-L-glutamylamino)butanal + NADP(+) + H2O = 4-(gamma-L-glutamylamino)butanoate + NADPH + 2 H(+). The catalysed reaction is 4-(gamma-L-glutamylamino)butanal + NAD(+) + H2O = 4-(gamma-L-glutamylamino)butanoate + NADH + 2 H(+). The protein operates within amine and polyamine degradation; putrescine degradation; 4-aminobutanoate from putrescine: step 3/4. Lithium ions exhibits the highest inhibition (97%). To a lesser extent (5-20%), potassium, sodium, and ammonium ions also inhibit PuuC activity. Transition metals, such as copper and zinc ions inhibit PuuC activity by more than 90%. The presence of heavy metals (mercury, silver) or sodium hydrogensulfite in the reaction mixture completely inactivate PuuC; in contrast, disulfide reductants such as DTT and 2-mercaptoethanol significantly increase its activity by 75% and 27%, respectively. Its function is as follows. Catalyzes the oxidation of 3-hydroxypropionaldehyde (3-HPA) to 3-hydroxypropionic acid (3-HP). It acts preferentially with NAD but can also use NADP. 3-HPA appears to be the most suitable substrate for PuuC followed by isovaleraldehyde, propionaldehyde, butyraldehyde, and valeraldehyde. It might play a role in propionate and/or acetic acid metabolisms. Also involved in the breakdown of putrescine through the oxidation of gamma-Glu-gamma-aminobutyraldehyde to gamma-Glu-gamma-aminobutyrate (gamma-Glu-GABA). The protein is NADP/NAD-dependent aldehyde dehydrogenase PuuC of Escherichia coli (strain K12).